Here is a 458-residue protein sequence, read N- to C-terminus: Argininosuccinate lyase (458 aa).

Belongs to the lyase 1 family. Argininosuccinate lyase subfamily.

It is found in the cytoplasm. It catalyses the reaction 2-(N(omega)-L-arginino)succinate = fumarate + L-arginine. The protein operates within amino-acid biosynthesis; L-arginine biosynthesis; L-arginine from L-ornithine and carbamoyl phosphate: step 3/3. This chain is Argininosuccinate lyase, found in Salmonella schwarzengrund (strain CVM19633).